We begin with the raw amino-acid sequence, 181 residues long: Large ribosomal subunit protein uL5 (181 aa).

It belongs to the universal ribosomal protein uL5 family. Part of the 50S ribosomal subunit; part of the 5S rRNA/L5/L18/L25 subcomplex. Contacts the 5S rRNA and the P site tRNA. Forms a bridge to the 30S subunit in the 70S ribosome.

This is one of the proteins that bind and probably mediate the attachment of the 5S RNA into the large ribosomal subunit, where it forms part of the central protuberance. In the 70S ribosome it contacts protein S13 of the 30S subunit (bridge B1b), connecting the 2 subunits; this bridge is implicated in subunit movement. Contacts the P site tRNA; the 5S rRNA and some of its associated proteins might help stabilize positioning of ribosome-bound tRNAs. In Campylobacter jejuni subsp. jejuni serotype O:6 (strain 81116 / NCTC 11828), this protein is Large ribosomal subunit protein uL5.